Reading from the N-terminus, the 355-residue chain is UDP-N-acetylglucosamine--N-acetylmuramyl-(pentapeptide) pyrophosphoryl-undecaprenol N-acetylglucosamine transferase (355 aa).

UDP-N-acetyl-alpha-D-glucosamine contacts are provided by residues Thr15–Gly17, Asn127, Arg163, Ser191, Ile244, Ala263–Glu268, and Gln288.

Belongs to the glycosyltransferase 28 family. MurG subfamily.

It is found in the cell inner membrane. The catalysed reaction is di-trans,octa-cis-undecaprenyl diphospho-N-acetyl-alpha-D-muramoyl-L-alanyl-D-glutamyl-meso-2,6-diaminopimeloyl-D-alanyl-D-alanine + UDP-N-acetyl-alpha-D-glucosamine = di-trans,octa-cis-undecaprenyl diphospho-[N-acetyl-alpha-D-glucosaminyl-(1-&gt;4)]-N-acetyl-alpha-D-muramoyl-L-alanyl-D-glutamyl-meso-2,6-diaminopimeloyl-D-alanyl-D-alanine + UDP + H(+). The protein operates within cell wall biogenesis; peptidoglycan biosynthesis. In terms of biological role, cell wall formation. Catalyzes the transfer of a GlcNAc subunit on undecaprenyl-pyrophosphoryl-MurNAc-pentapeptide (lipid intermediate I) to form undecaprenyl-pyrophosphoryl-MurNAc-(pentapeptide)GlcNAc (lipid intermediate II). The protein is UDP-N-acetylglucosamine--N-acetylmuramyl-(pentapeptide) pyrophosphoryl-undecaprenol N-acetylglucosamine transferase of Escherichia coli O139:H28 (strain E24377A / ETEC).